Consider the following 473-residue polypeptide: 3-oxoacyl-[acyl-carrier-protein] synthase I, chloroplastic (473 aa).

Residues 1 to 10 (MQALQSSSLR) are compositionally biased toward polar residues. Residues 1–26 (MQALQSSSLRASPPNPLRLPSNRQSH) form a disordered region. The N-terminal 46 residues, 1–46 (MQALQSSSLRASPPNPLRLPSNRQSHQLITNARPLRRQQRSFISAS), are a transit peptide targeting the chloroplast. A Ketosynthase family 3 (KS3) domain is found at 60 to 470 (KKRVVITGMG…GHNSVVAFSA (411 aa)). Residues Cys224, His364, and His400 each act as for beta-ketoacyl synthase activity in the active site.

This sequence belongs to the thiolase-like superfamily. Beta-ketoacyl-ACP synthases family. As to quaternary structure, homodimer.

Its subcellular location is the plastid. It localises to the chloroplast stroma. It carries out the reaction a fatty acyl-[ACP] + malonyl-[ACP] + H(+) = a 3-oxoacyl-[ACP] + holo-[ACP] + CO2. Its function is as follows. Catalyzes the condensation reaction of fatty acid synthesis by the addition to an acyl acceptor of two carbons from malonyl-ACP. Specific for elongation from C-10 to unsaturated C-16 and C-18 fatty acids. This is 3-oxoacyl-[acyl-carrier-protein] synthase I, chloroplastic (KAS1) from Arabidopsis thaliana (Mouse-ear cress).